The sequence spans 371 residues: Putative 26S proteasome regulatory subunit homolog MJ1494 (371 aa).

161–168 (GPPGTGKT) contacts ATP.

This sequence belongs to the AAA ATPase family.

The 26S proteasome is involved in the ATP-dependent degradation of ubiquitinated proteins. The regulatory (or ATPase) complex confers ATP dependency and substrate specificity to the 26S complex. The protein is Putative 26S proteasome regulatory subunit homolog MJ1494 of Methanocaldococcus jannaschii (strain ATCC 43067 / DSM 2661 / JAL-1 / JCM 10045 / NBRC 100440) (Methanococcus jannaschii).